The following is a 133-amino-acid chain: Lanmodulin (133 aa).

A signal peptide spans 1–21 (MAFRLSSAVLLAALVAAPAYA). Residues Asp-35, Asp-37, Asp-39, Thr-41, Glu-46, Asp-59, Asp-61, Asp-63, Thr-65, Glu-70, Asp-84, Asp-86, Asp-88, Thr-90, Glu-95, Asn-108, Asp-110, Asp-112, Thr-114, and Glu-119 each coordinate Nd(3+). 4 EF-hand domains span residues 35 to 46 (DPDKDGTIDLKE), 59 to 70 (DPDKDGTLDAKE), 84 to 95 (DPDNDGTLDKKE), and 108 to 119 (NPDNDGTIDARE).

As to quaternary structure, monomer.

It is found in the periplasm. High-affinity lanthanide (Ln)-binding protein. Shows 100 million-fold selectivity for La(3+) over Ca(2+). Binds 3 equiv of Ln(3+) with picomolar affinity and a fourth with approximately micromolar affinity. May be involved in receiving and then transporting lanthanides (such as La(3+), Nd(3+) and Sm(3+)) to a specific periplasmic destination. The polypeptide is Lanmodulin (Methylorubrum extorquens (strain ATCC 14718 / DSM 1338 / JCM 2805 / NCIMB 9133 / AM1) (Methylobacterium extorquens)).